Here is a 374-residue protein sequence, read N- to C-terminus: Tuliposide A-converting enzyme b3, amyloplastic (374 aa).

The N-terminal 68 residues, 1 to 68 (MSAALFCGPP…TNSSLSPSPT (68 aa)), are a transit peptide targeting the amyloplast. Ser226 functions as the Acyl-ester intermediate in the catalytic mechanism. Catalysis depends on charge relay system residues Asp316 and His348.

Belongs to the AB hydrolase superfamily. Homodimer. As to expression, highly expressed in pistil and bulb scales. Lower expression in stem, and barely detected in root, leaf, petal and stamen.

It localises to the plastid. The protein localises to the amyloplast. The enzyme catalyses 6-tuliposide A = tulipalin A + D-glucose. Lactone-forming carboxylesterases, specifically catalyzing intramolecular transesterification, but not hydrolysis. Involved in the biosynthesis of tulipalins, defensive chemicals that show antimicrobial activities against a broad range of strains of bacteria and fungi. Substrates are 6-tuliposide A &gt; 6-tuliposide B. The protein is Tuliposide A-converting enzyme b3, amyloplastic (TCEA-B3) of Tulipa gesneriana (Garden tulip).